A 105-amino-acid polypeptide reads, in one-letter code: Large ribosomal subunit protein uL24 (105 aa).

The protein belongs to the universal ribosomal protein uL24 family. In terms of assembly, part of the 50S ribosomal subunit.

In terms of biological role, one of two assembly initiator proteins, it binds directly to the 5'-end of the 23S rRNA, where it nucleates assembly of the 50S subunit. Functionally, one of the proteins that surrounds the polypeptide exit tunnel on the outside of the subunit. This is Large ribosomal subunit protein uL24 from Methylobacillus flagellatus (strain ATCC 51484 / DSM 6875 / VKM B-1610 / KT).